The following is a 270-amino-acid chain: MPRYGFHLSIAGKKGVAGAVEEATALGLTAFQIFAKSPRSWRPRALSPAEVEAFRALREASGGLPAVIHASYLVNLGAEGELWEKSVASLADDLEKAALLGVEYVVVHPGSGRPERVKEGALKALRLAGVRSRPVLLVENTAGGGEKVGARFEELAWLVADTPLQVCLDTCHAYAAGYDVAEDPLGVLDALDRAVGLERVPVVHLNDSVGGLGSRVDHHAHLLQGKIGEGLKRVFLDPRLKDRVFILETPRGPEEDAWNLRVLRAWLEEA.

Zn(2+)-binding residues include H69, H108, E139, D169, H172, H204, D217, H219, and E248.

The protein belongs to the AP endonuclease 2 family. Zn(2+) serves as cofactor.

The catalysed reaction is Endonucleolytic cleavage to 5'-phosphooligonucleotide end-products.. Its function is as follows. Endonuclease IV plays a role in DNA repair. It cleaves phosphodiester bonds at apurinic or apyrimidinic (AP) sites, generating a 3'-hydroxyl group and a 5'-terminal sugar phosphate. In addition, possesses a 3'-5' exonuclease activity. The protein is Endonuclease 4 of Thermus thermophilus (strain ATCC BAA-163 / DSM 7039 / HB27).